We begin with the raw amino-acid sequence, 126 residues long: Ribosome-binding factor A (126 aa).

It belongs to the RbfA family. As to quaternary structure, monomer. Binds 30S ribosomal subunits, but not 50S ribosomal subunits or 70S ribosomes.

It is found in the cytoplasm. Functionally, one of several proteins that assist in the late maturation steps of the functional core of the 30S ribosomal subunit. Associates with free 30S ribosomal subunits (but not with 30S subunits that are part of 70S ribosomes or polysomes). Required for efficient processing of 16S rRNA. May interact with the 5'-terminal helix region of 16S rRNA. The protein is Ribosome-binding factor A of Treponema pallidum (strain Nichols).